The following is a 218-amino-acid chain: Thiopurine S-methyltransferase (218 aa).

The S-adenosyl-L-methionine site is built by W10, L45, E66, and R123.

The protein belongs to the class I-like SAM-binding methyltransferase superfamily. TPMT family.

The protein localises to the cytoplasm. The catalysed reaction is S-adenosyl-L-methionine + a thiopurine = S-adenosyl-L-homocysteine + a thiopurine S-methylether.. The protein is Thiopurine S-methyltransferase of Pseudomonas aeruginosa (strain ATCC 15692 / DSM 22644 / CIP 104116 / JCM 14847 / LMG 12228 / 1C / PRS 101 / PAO1).